The sequence spans 421 residues: Tyrosine--tRNA ligase (421 aa).

L-tyrosine is bound at residue tyrosine 35. Residues 40–49 carry the 'HIGH' region motif; sequence PTADSLHIGH. L-tyrosine-binding residues include tyrosine 170 and glutamine 174. Residues 232-236 carry the 'KMSKS' region motif; it reads KFGKT. Lysine 235 serves as a coordination point for ATP. In terms of domain architecture, S4 RNA-binding spans 355-421; the sequence is LSLVDVLVES…GKKKYFLITY (67 aa).

The protein belongs to the class-I aminoacyl-tRNA synthetase family. TyrS type 1 subfamily. As to quaternary structure, homodimer.

Its subcellular location is the cytoplasm. The catalysed reaction is tRNA(Tyr) + L-tyrosine + ATP = L-tyrosyl-tRNA(Tyr) + AMP + diphosphate + H(+). Functionally, catalyzes the attachment of tyrosine to tRNA(Tyr) in a two-step reaction: tyrosine is first activated by ATP to form Tyr-AMP and then transferred to the acceptor end of tRNA(Tyr). The sequence is that of Tyrosine--tRNA ligase from Bacillus velezensis (strain DSM 23117 / BGSC 10A6 / LMG 26770 / FZB42) (Bacillus amyloliquefaciens subsp. plantarum).